The sequence spans 157 residues: Transcriptional repressor NrdR (157 aa).

A zinc finger lies at 3 to 34 (CSNCQNKNTKVLDSRPIEEGRAIRRRRECERC). Residues 49 to 139 (LIVVKKDGVR…VYRQFKDITV (91 aa)) form the ATP-cone domain.

This sequence belongs to the NrdR family. Zn(2+) serves as cofactor.

Its function is as follows. Negatively regulates transcription of bacterial ribonucleotide reductase nrd genes and operons by binding to NrdR-boxes. The polypeptide is Transcriptional repressor NrdR (Oceanobacillus iheyensis (strain DSM 14371 / CIP 107618 / JCM 11309 / KCTC 3954 / HTE831)).